The chain runs to 116 residues: S-adenosylmethionine decarboxylase proenzyme (116 aa).

Residue S63 is the Schiff-base intermediate with substrate; via pyruvic acid of the active site. Position 63 is a pyruvic acid (Ser); by autocatalysis (S63). H68 acts as the Proton acceptor; for processing activity in catalysis. The active-site Proton donor; for catalytic activity is the C83.

The protein belongs to the prokaryotic AdoMetDC family. Type 1 subfamily. Heterotetramer of two alpha and two beta chains arranged as a dimer of alpha/beta heterodimers. The cofactor is pyruvate. Post-translationally, is synthesized initially as an inactive proenzyme. Formation of the active enzyme involves a self-maturation process in which the active site pyruvoyl group is generated from an internal serine residue via an autocatalytic post-translational modification. Two non-identical subunits are generated from the proenzyme in this reaction, and the pyruvate is formed at the N-terminus of the alpha chain, which is derived from the carboxyl end of the proenzyme. The post-translation cleavage follows an unusual pathway, termed non-hydrolytic serinolysis, in which the side chain hydroxyl group of the serine supplies its oxygen atom to form the C-terminus of the beta chain, while the remainder of the serine residue undergoes an oxidative deamination to produce ammonia and the pyruvoyl group blocking the N-terminus of the alpha chain.

It carries out the reaction S-adenosyl-L-methionine + H(+) = S-adenosyl 3-(methylsulfanyl)propylamine + CO2. The protein operates within amine and polyamine biosynthesis; S-adenosylmethioninamine biosynthesis; S-adenosylmethioninamine from S-adenosyl-L-methionine: step 1/1. Catalyzes the decarboxylation of S-adenosylmethionine to S-adenosylmethioninamine (dcAdoMet), the propylamine donor required for the synthesis of the polyamines spermine and spermidine from the diamine putrescine. This is S-adenosylmethionine decarboxylase proenzyme from Clostridium botulinum (strain Okra / Type B1).